Reading from the N-terminus, the 200-residue chain is MNEIYLIGLGNPGKKYFNSRHNIGFLLLESFSKKYNSNFLLKDKLKSSCSEFQINNSTFKLFLPNTFMNNSGDAVRAIVDWYKINLDQILIIVDDKDLPLGKIRFRRKGSSGGHNGLKSIIEQLQTQNFKRIRIGIGSPPITNGKNHFNTISHVLGNISLDEKSILDKVYSRVIESLEQINTKKEEYIINELNSFDKDQP.

TRNA is bound at residue tyrosine 16. The active-site Proton acceptor is histidine 21. 3 residues coordinate tRNA: phenylalanine 67, asparagine 69, and asparagine 115.

This sequence belongs to the PTH family. In terms of assembly, monomer.

The protein resides in the cytoplasm. It carries out the reaction an N-acyl-L-alpha-aminoacyl-tRNA + H2O = an N-acyl-L-amino acid + a tRNA + H(+). Its function is as follows. Hydrolyzes ribosome-free peptidyl-tRNAs (with 1 or more amino acids incorporated), which drop off the ribosome during protein synthesis, or as a result of ribosome stalling. Functionally, catalyzes the release of premature peptidyl moieties from peptidyl-tRNA molecules trapped in stalled 50S ribosomal subunits, and thus maintains levels of free tRNAs and 50S ribosomes. In Prochlorococcus marinus (strain AS9601), this protein is Peptidyl-tRNA hydrolase.